Reading from the N-terminus, the 125-residue chain is Oxytocin-neurophysin 1 (125 aa).

Residues 1–19 (MAGSSLACCLLGLLALTSA) form the signal peptide. Cys20 and Cys25 form a disulfide bridge. Gly28 bears the Glycine amide mark. Cystine bridges form between Cys41–Cys85, Cys44–Cys58, Cys52–Cys75, Cys59–Cys65, Cys92–Cys104, Cys98–Cys116, and Cys105–Cys110.

The protein belongs to the vasopressin/oxytocin family. As to quaternary structure, interacts with oxytocin receptor (Ki=1.5 nM). Interacts with vasopressin V1aR/AVPR1A (Ki=37 nM), V1bR/AVPR1B (Ki=222 nM), and V2R/AVPR2 receptors (Ki=823 nM).

The protein resides in the secreted. In terms of biological role, neurophysin 1 specifically binds oxytocin. Functionally, oxytocin causes contraction of the smooth muscle of the uterus and of the mammary gland. Acts by binding to oxytocin receptor (OXTR). This is Oxytocin-neurophysin 1 (OXT) from Bos taurus (Bovine).